Here is a 300-residue protein sequence, read N- to C-terminus: MKFKMKVVTQGILLCIFSQCLFGILYLFSIWLQPLSGTDVFAWRMLTMIFGLLLILFPTIGCRSLLSLITTTLGKSWTRWVLFLLGTLDAGSQFWLFMWAPLNGEGINIAMGYFLFPLIMAVLGWAWLKERLSFIQKIALLLAAAGVAHELWHTQSFSWTSLWVCTVYPFYYLSRKWMKIPALQGITLDIILISIPCFIYILSQSDTLSLVTQEYRYWLLLPALGIVSAISLSANLKSSQQIPVSIFAVLSYIEPILLFLIAVFVLDNQITTSDYFTYVPIWLSLIVIGIEGLLNKKKVR.

8 helical membrane passes run 13-35, 45-67, 80-102, 106-128, 180-202, 217-236, 243-265, and 275-294; these read LLCIFSQCLFGILYLFSIWLQPL, MLTMIFGLLLILFPTIGCRSLLS, WVLFLLGTLDAGSQFWLFMWAPL, GINIAMGYFLFPLIMAVLGWAWL, IPALQGITLDIILISIPCFIYIL, YWLLLPALGIVSAISLSANL, PVSIFAVLSYIEPILLFLIAVFV, and YFTYVPIWLSLIVIGIEGLL.

This sequence belongs to the EamA transporter family.

Its subcellular location is the cell membrane. This is an uncharacterized protein from Haemophilus influenzae (strain ATCC 51907 / DSM 11121 / KW20 / Rd).